The chain runs to 251 residues: MNFQGKVVLITGAGSGIGKKAAVMFAERGAKVAINDISEEKGKETVELIKSMGGEAAFIFGDVAKDAEQIVKKTVETFGRLDILVNNAGIVPYGNIEETSEEDFDKTMAVNVKGPFLLSKYAVEQMKKQGGGVIVNVSSEAGLIGIPRRCVYSVSKAALLGLTRSLAVDYVDYGIRVNAVCPGTTQSEGLMARVKASPNPEELLKKMTSRIPMKRLGKEEEIAFAILFAACDEAGFMTGSIINIDGGSTAV.

10 to 34 (ITGAGSGIGKKAAVMFAERGAKVAI) lines the NADP(+) pocket. Ser-139 is a substrate binding site. Tyr-152 acts as the Proton acceptor in catalysis.

The protein belongs to the short-chain dehydrogenases/reductases (SDR) family.

This is an uncharacterized protein from Thermotoga maritima (strain ATCC 43589 / DSM 3109 / JCM 10099 / NBRC 100826 / MSB8).